The chain runs to 612 residues: Putative pentatricopeptide repeat-containing protein At5g40405 (612 aa).

PPR repeat units lie at residues 70–104, 107–141, 142–172, 173–203, 204–238, 239–273, 274–304, 305–339, 340–375, and 376–410; these read TLFA…GNDL, DNYT…GFDN, DPHV…IPCP, DFVC…MPER, DPIA…GVKV, NGVA…KIKI, TVRL…MEEK, NVYT…GVTP, NAVT…GIEP, and QLEH…PHAA. Positions 411-486 are type E motif; sequence VWSSLLHASR…QPGCSVMEVN (76 aa). The interval 487–517 is type E(+) motif; the sequence is GEVHEFFVGDKSHPKYTQIDAVWKDISRRLR. Residues 518–612 are type DYW motif; that stretch reads LAGYKADTTP…DGHCSCNGFW (95 aa).

This sequence belongs to the PPR family. PCMP-H subfamily.

This chain is Putative pentatricopeptide repeat-containing protein At5g40405 (PCMP-H14), found in Arabidopsis thaliana (Mouse-ear cress).